A 21-amino-acid chain; its full sequence is Neuropeptide gamma (21 aa).

The segment at Ser-1–Met-21 is disordered. Methionine amide is present on Met-21.

This sequence belongs to the tachykinin family.

The protein resides in the secreted. Its function is as follows. Tachykinins are active peptides which excite neurons, evoke behavioral responses, and contract (directly or indirectly) many smooth muscles. Is a potent vasoconstrictor and secretagogue that plays a regulatory role in the central control of ventilation, in particular, the heart rate variability (HRV). This is Neuropeptide gamma from Oncorhynchus mykiss (Rainbow trout).